The chain runs to 438 residues: MKLLTLGINHHTAPVAIREKVAFDPEFLQEALHDLRQHLLGANQSGLPEATILSTCNRTEVYCAANDANAANILHEATFDWLAKTQQLAPSSLQPHIYSLPQSDAVRHAFRVACGLDSMVIGETQILGQMKDAVRTANDAGVLGTYLNQLFQKTFAVAKEVRGSTEIGTHSISMAAASVRLSERIFEKISEQKILFIGAGDMITLCATHFVARKPKNVAIANRTIERGQELADSISAQDVQAESLKLSELPGRLHEFDIIVSSTASSLPIIGLGMVESALKQRRHKPMVMIDLAVPRDFEPEIARLDDVYLYTVDDLGVMIQTGTNLRQAAVSQAEAIIEDRVGNFMHWMQGRNAVPVIQDIQQQGERLRQLELERAMKRLMRGDDPQEVLNAMAQGLTNKFLHGSLHALQHSNGAERDALIKLLPKLFASHSKPEDH.

Residues 55–58, Ser-118, 123–125, and Gln-129 contribute to the substrate site; these read TCNR and ETQ. Residue Cys-56 is the Nucleophile of the active site. Residue 198–203 coordinates NADP(+); that stretch reads GAGDMI.

This sequence belongs to the glutamyl-tRNA reductase family. As to quaternary structure, homodimer.

It catalyses the reaction (S)-4-amino-5-oxopentanoate + tRNA(Glu) + NADP(+) = L-glutamyl-tRNA(Glu) + NADPH + H(+). It functions in the pathway porphyrin-containing compound metabolism; protoporphyrin-IX biosynthesis; 5-aminolevulinate from L-glutamyl-tRNA(Glu): step 1/2. Catalyzes the NADPH-dependent reduction of glutamyl-tRNA(Glu) to glutamate 1-semialdehyde (GSA). The chain is Glutamyl-tRNA reductase from Polynucleobacter asymbioticus (strain DSM 18221 / CIP 109841 / QLW-P1DMWA-1) (Polynucleobacter necessarius subsp. asymbioticus).